The primary structure comprises 428 residues: Enolase (428 aa).

Gln167 lines the (2R)-2-phosphoglycerate pocket. The Proton donor role is filled by Glu209. Asp246, Glu288, and Asp315 together coordinate Mg(2+). (2R)-2-phosphoglycerate-binding residues include Lys340, Arg369, Ser370, and Lys391. Lys340 (proton acceptor) is an active-site residue.

The protein belongs to the enolase family. As to quaternary structure, component of the RNA degradosome, a multiprotein complex involved in RNA processing and mRNA degradation. It depends on Mg(2+) as a cofactor.

The protein resides in the cytoplasm. Its subcellular location is the secreted. The protein localises to the cell surface. It carries out the reaction (2R)-2-phosphoglycerate = phosphoenolpyruvate + H2O. It functions in the pathway carbohydrate degradation; glycolysis; pyruvate from D-glyceraldehyde 3-phosphate: step 4/5. Its function is as follows. Catalyzes the reversible conversion of 2-phosphoglycerate (2-PG) into phosphoenolpyruvate (PEP). It is essential for the degradation of carbohydrates via glycolysis. This Pseudomonas savastanoi pv. phaseolicola (strain 1448A / Race 6) (Pseudomonas syringae pv. phaseolicola (strain 1448A / Race 6)) protein is Enolase.